The sequence spans 201 residues: Thymidine kinase (201 aa).

ATP is bound by residues 9 to 16 and 87 to 90; these read SAMNAGKS and DECH. The active-site Proton acceptor is E88. Residues C145, C147, C182, and H185 each contribute to the Zn(2+) site.

The protein belongs to the thymidine kinase family. Homotetramer.

It is found in the cytoplasm. It catalyses the reaction thymidine + ATP = dTMP + ADP + H(+). The protein is Thymidine kinase of Photorhabdus laumondii subsp. laumondii (strain DSM 15139 / CIP 105565 / TT01) (Photorhabdus luminescens subsp. laumondii).